A 365-amino-acid polypeptide reads, in one-letter code: Peptide chain release factor 2 (365 aa).

Residue Gln-252 is modified to N5-methylglutamine.

This sequence belongs to the prokaryotic/mitochondrial release factor family. Post-translationally, methylated by PrmC. Methylation increases the termination efficiency of RF2.

Its subcellular location is the cytoplasm. Its function is as follows. Peptide chain release factor 2 directs the termination of translation in response to the peptide chain termination codons UGA and UAA. The sequence is that of Peptide chain release factor 2 from Pectobacterium atrosepticum (strain SCRI 1043 / ATCC BAA-672) (Erwinia carotovora subsp. atroseptica).